The following is a 202-amino-acid chain: LexA repressor (202 aa).

The H-T-H motif DNA-binding region spans 28 to 48 (QQEIARAFGFRSLGTVRNYLV). Catalysis depends on for autocatalytic cleavage activity residues S120 and K157.

Belongs to the peptidase S24 family. Homodimer.

It catalyses the reaction Hydrolysis of Ala-|-Gly bond in repressor LexA.. Represses a number of genes involved in the response to DNA damage (SOS response), including recA and lexA. In the presence of single-stranded DNA, RecA interacts with LexA causing an autocatalytic cleavage which disrupts the DNA-binding part of LexA, leading to derepression of the SOS regulon and eventually DNA repair. The protein is LexA repressor of Syntrophotalea carbinolica (strain DSM 2380 / NBRC 103641 / GraBd1) (Pelobacter carbinolicus).